The chain runs to 797 residues: MVQNNESVFFVECDSYKESPSTSPIRLDDLDGNDAVSDQGLAFDGDVGITSQARVRNPRAQIFEDSNTDVVLHLDDLDMVPLNTKFDMQMEMGSPMAMPAETPPPVEPLKTKDLAYSSLAHLPSYFFEQTHFRIDRKCLLEMSKLRRNYLTISKQDALSCPQLHSRVAGGYLKPVKEKLFGIRHFLDLEESNTVNLLQDGNYMTELFNSQINIPTFKEFREDFEWCLKIIRDRSLSRFSEKRLQYLVNKFPVFQHLHSKEEMRQSKKVPHKDFYNCRKIDLNLLLSGCFSQWQLTEFIWTKLRKEPDRVIHQAFNGSHITLSQLFKVNFEETGQFFNGLKIIDDSFLEWYKVIYLAKYHLVNDEMEIHTGSHGKQLRYYLIAKTFLEFDNYINGEYLAELLKTFLIKPQEESKYQLCQLSVDFQFYLHYDNSDVDNWWMVFANWLNHYNIFSNNIRWNIRISRIYPELYHTGKVKNFQEYLNLIFKPLFNAENYLHKSLGPILLKFLSQVSSIDLCIQDTDNYIWKNFTAVSCLPKDWTSGGDNPTISQYMYYVYVNLTKLNHIRQALHQNTFTLRSSCSPTSMNRTSQFSNTLNFTEHTEAILNNFLLACGGFLNAENLWNAPPSLVYLFYLSQIPMVVAPLNSIVDSKPTMLQEQAPTGLVLEPSKPYKKNPFMKFFEMGFKISLSSESILYNNSYTKEPIIEEYSVAASIYRLHSADLCELLRNSVITSGFSSTLKNKWLGVSLASHDYFVENTGFVDKWYDCKPNTSLEHNVPIIRRQYRSSTLAGEWRLIIA.

The chain crosses the membrane as a helical span at residues 627-647; it reads LVYLFYLSQIPMVVAPLNSIV.

This sequence belongs to the metallo-dependent hydrolases superfamily. Adenosine and AMP deaminases family.

It localises to the membrane. The polypeptide is Inactive deaminase YBR284W (Saccharomyces cerevisiae (strain ATCC 204508 / S288c) (Baker's yeast)).